The sequence spans 100 residues: Urease subunit gamma (100 aa).

Belongs to the urease gamma subunit family. In terms of assembly, heterotrimer of UreA (gamma), UreB (beta) and UreC (alpha) subunits. Three heterotrimers associate to form the active enzyme.

It is found in the cytoplasm. The catalysed reaction is urea + 2 H2O + H(+) = hydrogencarbonate + 2 NH4(+). It participates in nitrogen metabolism; urea degradation; CO(2) and NH(3) from urea (urease route): step 1/1. The chain is Urease subunit gamma from Cupriavidus taiwanensis (strain DSM 17343 / BCRC 17206 / CCUG 44338 / CIP 107171 / LMG 19424 / R1) (Ralstonia taiwanensis (strain LMG 19424)).